The sequence spans 415 residues: MRLLDDLQAGLAAIDAAHLRRVRRTAYSPTDRSQRISVPGEAPRDILGFCGNDYLGLAAHPALVEAMTQGTQQYGFGSGASHLVSGHSIAHARLEARMAALQGEHIPEADALFFCTGYMANLAVVSAMAQAGGIRPAEECTIFSDALNHASLIDGARLSRAPIKVYPHVDLAALEALLAASTSRNKLIVTDGVFSMDGDIAPLPELLALAERYDAWLIVDDAHGLGVLGENGAGVLSHFGLHSQRIIYVGTFGKAAGGSGAAIVGHRLVIDWLVQRARTYIFTTATPPGIACAVEAALDLIASEEGDERRARLDRHIAVWSAHAQRLAARFGWQWMPSPTAIQPIVIGENAPALALAAALEHEGIRIAAIRPPTVPAGTARLRITLSAAHTDADIERLAQALEAAGQSLQPAKAA.

Arg-21 serves as a coordination point for substrate. Residue Gly-117 to Tyr-118 coordinates pyridoxal 5'-phosphate. His-149 contacts substrate. Positions 195, 223, and 251 each coordinate pyridoxal 5'-phosphate. Residue Lys-254 is modified to N6-(pyridoxal phosphate)lysine. Thr-374 serves as a coordination point for substrate.

The protein belongs to the class-II pyridoxal-phosphate-dependent aminotransferase family. BioF subfamily. As to quaternary structure, homodimer. The cofactor is pyridoxal 5'-phosphate.

The catalysed reaction is 6-carboxyhexanoyl-[ACP] + L-alanine + H(+) = (8S)-8-amino-7-oxononanoate + holo-[ACP] + CO2. It functions in the pathway cofactor biosynthesis; biotin biosynthesis. Its function is as follows. Catalyzes the decarboxylative condensation of pimeloyl-[acyl-carrier protein] and L-alanine to produce 8-amino-7-oxononanoate (AON), [acyl-carrier protein], and carbon dioxide. The polypeptide is 8-amino-7-oxononanoate synthase (Ralstonia pickettii (strain 12J)).